A 365-amino-acid polypeptide reads, in one-letter code: Histidinol-phosphate aminotransferase (365 aa).

N6-(pyridoxal phosphate)lysine is present on K223.

Belongs to the class-II pyridoxal-phosphate-dependent aminotransferase family. Histidinol-phosphate aminotransferase subfamily. Homodimer. Pyridoxal 5'-phosphate serves as cofactor.

The enzyme catalyses L-histidinol phosphate + 2-oxoglutarate = 3-(imidazol-4-yl)-2-oxopropyl phosphate + L-glutamate. Its pathway is amino-acid biosynthesis; L-histidine biosynthesis; L-histidine from 5-phospho-alpha-D-ribose 1-diphosphate: step 7/9. This is Histidinol-phosphate aminotransferase from Brucella melitensis biotype 1 (strain ATCC 23456 / CCUG 17765 / NCTC 10094 / 16M).